The primary structure comprises 325 residues: Probable 4-hydroxy-tetrahydrodipicolinate reductase 2, chloroplastic (325 aa).

The N-terminal 32 residues, 1–32, are a transit peptide targeting the chloroplast; it reads MLSLRPPCTLSPAPWRRRRTLHGAAGTPQRVS. Residues 57 to 62, 149 to 151, and 172 to 175 each bind NAD(+); these read GCTGKM, GTT, and SPQM. Residue histidine 208 is the Proton donor/acceptor of the active site. Lysine 212 acts as the Proton donor in catalysis. A (S)-2,3,4,5-tetrahydrodipicolinate-binding site is contributed by 217–218; sequence GT.

It belongs to the DapB family.

It is found in the plastid. The protein localises to the chloroplast. It catalyses the reaction (S)-2,3,4,5-tetrahydrodipicolinate + NAD(+) + H2O = (2S,4S)-4-hydroxy-2,3,4,5-tetrahydrodipicolinate + NADH + H(+). It carries out the reaction (S)-2,3,4,5-tetrahydrodipicolinate + NADP(+) + H2O = (2S,4S)-4-hydroxy-2,3,4,5-tetrahydrodipicolinate + NADPH + H(+). Its pathway is amino-acid biosynthesis; L-lysine biosynthesis via DAP pathway; (S)-tetrahydrodipicolinate from L-aspartate: step 4/4. Functionally, catalyzes the conversion of 4-hydroxy-tetrahydrodipicolinate (HTPA) to tetrahydrodipicolinate. This Oryza sativa subsp. japonica (Rice) protein is Probable 4-hydroxy-tetrahydrodipicolinate reductase 2, chloroplastic (DAPB2).